The sequence spans 120 residues: MAGKKPSHRAFKVADQIQRDLTQLLARLKDPRLGLVTLQGVEISPDYAHAKVFFSLLTGTPEQTQAALDQAAGFLRNGLFKRLQIHTVPTLHFVFDRSCERAADMNALIAKAVSTRAKED.

It belongs to the RbfA family. Monomer. Binds 30S ribosomal subunits, but not 50S ribosomal subunits or 70S ribosomes.

Its subcellular location is the cytoplasm. Its function is as follows. One of several proteins that assist in the late maturation steps of the functional core of the 30S ribosomal subunit. Associates with free 30S ribosomal subunits (but not with 30S subunits that are part of 70S ribosomes or polysomes). Required for efficient processing of 16S rRNA. May interact with the 5'-terminal helix region of 16S rRNA. The chain is Ribosome-binding factor A from Verminephrobacter eiseniae (strain EF01-2).